A 274-amino-acid chain; its full sequence is Thiamine kinase (274 aa).

This sequence belongs to the thiamine kinase family.

The enzyme catalyses thiamine + ATP = thiamine phosphate + ADP + H(+). The protein operates within cofactor biosynthesis; thiamine diphosphate biosynthesis; thiamine phosphate from thiamine: step 1/1. Catalyzes the ATP-dependent phosphorylation of thiamine to thiamine phosphate. Is involved in thiamine salvage. This Escherichia coli O9:H4 (strain HS) protein is Thiamine kinase.